We begin with the raw amino-acid sequence, 698 residues long: Ion-translocating oxidoreductase complex subunit C (698 aa).

2 consecutive 4Fe-4S ferredoxin-type domains span residues 366–397 (TEMG…QQLY) and 407–436 (KARN…VQYY). Cysteine 377, cysteine 380, cysteine 383, cysteine 387, cysteine 416, cysteine 419, cysteine 422, and cysteine 426 together coordinate [4Fe-4S] cluster.

This sequence belongs to the 4Fe4S bacterial-type ferredoxin family. RnfC subfamily. In terms of assembly, the complex is composed of six subunits: RnfA, RnfB, RnfC, RnfD, RnfE and RnfG. The cofactor is [4Fe-4S] cluster.

The protein resides in the cell inner membrane. Its function is as follows. Part of a membrane-bound complex that couples electron transfer with translocation of ions across the membrane. In Yersinia pseudotuberculosis serotype O:1b (strain IP 31758), this protein is Ion-translocating oxidoreductase complex subunit C.